A 925-amino-acid polypeptide reads, in one-letter code: Bifunctional glutamine synthetase adenylyltransferase/adenylyl-removing enzyme (925 aa).

The adenylyl removase stretch occupies residues M1–K426. Positions D436–A925 are adenylyl transferase.

It belongs to the GlnE family. It depends on Mg(2+) as a cofactor.

The catalysed reaction is [glutamine synthetase]-O(4)-(5'-adenylyl)-L-tyrosine + phosphate = [glutamine synthetase]-L-tyrosine + ADP. It catalyses the reaction [glutamine synthetase]-L-tyrosine + ATP = [glutamine synthetase]-O(4)-(5'-adenylyl)-L-tyrosine + diphosphate. Involved in the regulation of glutamine synthetase GlnA, a key enzyme in the process to assimilate ammonia. When cellular nitrogen levels are high, the C-terminal adenylyl transferase (AT) inactivates GlnA by covalent transfer of an adenylyl group from ATP to specific tyrosine residue of GlnA, thus reducing its activity. Conversely, when nitrogen levels are low, the N-terminal adenylyl removase (AR) activates GlnA by removing the adenylyl group by phosphorolysis, increasing its activity. The regulatory region of GlnE binds the signal transduction protein PII (GlnB) which indicates the nitrogen status of the cell. The sequence is that of Bifunctional glutamine synthetase adenylyltransferase/adenylyl-removing enzyme from Burkholderia mallei (strain ATCC 23344).